An 88-amino-acid polypeptide reads, in one-letter code: Molybdopterin synthase sulfur carrier subunit (88 aa).

Residue Gly88 is modified to 1-thioglycine; alternate. Residue Gly88 is modified to Glycyl adenylate; alternate.

Belongs to the MoaD family. MOCS2A subfamily. In terms of assembly, heterotetramer; composed of 2 small (MOCS2A) and 2 large (MOCS2B) subunits. C-terminal thiocarboxylation occurs in 2 steps, it is first acyl-adenylated (-COAMP) via the hesA/moeB/thiF part of uba4, then thiocarboxylated (-COSH) via the rhodanese domain of uba4.

It is found in the cytoplasm. The protein operates within cofactor biosynthesis; molybdopterin biosynthesis. Its function is as follows. Acts as a sulfur carrier required for molybdopterin biosynthesis. Component of the molybdopterin synthase complex that catalyzes the conversion of precursor Z into molybdopterin by mediating the incorporation of 2 sulfur atoms into precursor Z to generate a dithiolene group. In the complex, serves as sulfur donor by being thiocarboxylated (-COSH) at its C-terminus by uba4. After interaction with MOCS2B, the sulfur is then transferred to precursor Z to form molybdopterin. The chain is Molybdopterin synthase sulfur carrier subunit from Aspergillus niger (strain ATCC MYA-4892 / CBS 513.88 / FGSC A1513).